The sequence spans 116 residues: Large ribosomal subunit protein bL17 (116 aa).

It belongs to the bacterial ribosomal protein bL17 family. In terms of assembly, part of the 50S ribosomal subunit. Contacts protein L32.

This chain is Large ribosomal subunit protein bL17, found in Fusobacterium nucleatum subsp. nucleatum (strain ATCC 25586 / DSM 15643 / BCRC 10681 / CIP 101130 / JCM 8532 / KCTC 2640 / LMG 13131 / VPI 4355).